The primary structure comprises 36 residues: Serum amyloid P-component (36 aa).

Positions 6 to 36 constitute a Pentraxin (PTX) domain; that stretch reads SGKVFVIPMATSTSHVKLHARVSEPISAMTM.

It belongs to the pentraxin family. As to quaternary structure, homopentamer. Discoid arrangement of 5 covalently bound subunits. Ca(2+) is required as a cofactor.

It localises to the secreted. This is Serum amyloid P-component from Salmo salar (Atlantic salmon).